The primary structure comprises 493 residues: Argininosuccinate lyase (493 aa).

It belongs to the lyase 1 family. Argininosuccinate lyase subfamily.

The protein localises to the cytoplasm. It carries out the reaction 2-(N(omega)-L-arginino)succinate = fumarate + L-arginine. It functions in the pathway amino-acid biosynthesis; L-arginine biosynthesis; L-arginine from L-ornithine and carbamoyl phosphate: step 3/3. The polypeptide is Argininosuccinate lyase (Methanospirillum hungatei JF-1 (strain ATCC 27890 / DSM 864 / NBRC 100397 / JF-1)).